The chain runs to 326 residues: Putative F-box protein At3g22710 (326 aa).

The region spanning 1–50 (MTMPDLPPDLVEEILSRVPATSVKKLRSTCTQWNAIFKDERFTEKHFSKA) is the F-box domain.

This is Putative F-box protein At3g22710 from Arabidopsis thaliana (Mouse-ear cress).